We begin with the raw amino-acid sequence, 260 residues long: Thiamine thiazole synthase (260 aa).

NAD(+)-binding positions include Ser41, 60 to 61 (ER), Gly68, Val131, and 159 to 161 (HVD). 2 residues coordinate Fe cation: Asp161 and His176. Residue Met225 participates in NAD(+) binding. Arg235 provides a ligand contact to glycine.

This sequence belongs to the THI4 family. In terms of assembly, homooctamer; tetramer of dimers. It depends on Fe(2+) as a cofactor.

It carries out the reaction hydrogen sulfide + glycine + NAD(+) = ADP-5-ethyl-4-methylthiazole-2-carboxylate + nicotinamide + 3 H2O + H(+). It participates in cofactor biosynthesis; thiamine diphosphate biosynthesis. Its function is as follows. Involved in the biosynthesis of the thiazole moiety of thiamine. Catalyzes the conversion of NAD and glycine to adenosine diphosphate 5-(2-hydroxyethyl)-4-methylthiazole-2-carboxylate (ADT), an adenylated thiazole intermediate, using free sulfide as a source of sulfur. The protein is Thiamine thiazole synthase of Archaeoglobus fulgidus (strain ATCC 49558 / DSM 4304 / JCM 9628 / NBRC 100126 / VC-16).